Consider the following 1910-residue polypeptide: Endoribonuclease dcr-1 (1910 aa).

Residues 20–201 (LLDKATKKNT…KLMEQLKKLE (182 aa)) enclose the Helicase ATP-binding domain. 33 to 40 (LGTGSGKT) provides a ligand contact to ATP. The DEAH box motif lies at 145–148 (DECH). The 172-residue stretch at 371–542 (EFQKERMKLE…TVNNPIEDDS (172 aa)) folds into the Helicase C-terminal domain. The region spanning 571 to 667 (AIALINRYCS…LPKGRESIAK (97 aa)) is the Dicer dsRNA-binding fold domain. The 159-residue stretch at 845 to 1003 (YVSEVVANME…LVPELMDIHP (159 aa)) folds into the PAZ domain. Disordered stretches follow at residues 951-988 (RIQNQPRRSRTVSNSSTSNIPQASASDSKESNTSVPHS), 1227-1248 (TASSSLSQTVQESTVSPPKQLT), and 1272-1309 (LEMSEDMEKPRRLEDTVNLEDYGDDQENQEDENTPTNF). Polar residues-rich tracts occupy residues 970 to 988 (IPQASASDSKESNTSVPHS) and 1227 to 1245 (TASSSLSQTVQESTVSPPK). The stretch at 1245–1280 (KQLTKEEEQFKKLQNDLLKQAKERLEALEMSEDMEK) forms a coiled coil. Residues 1272–1286 (LEMSEDMEKPRRLED) show a composition bias toward basic and acidic residues. Acidic residues predominate over residues 1288-1304 (VNLEDYGDDQENQEDEN). RNase III domains are found at residues 1381–1589 (VSHI…LTLG) and 1643–1805 (FTQL…LDSG). The Mg(2+) site is built by E1682, D1791, and E1794. The region spanning 1833-1896 (SPIRELMEFE…AKRALKYLHQ (64 aa)) is the DRBM domain.

The protein belongs to the helicase family. Dicer subfamily. Component of the ERI/DICER complex at least composed of dcr-1, rrf-3 and eri-1. Interacts with pir-1. Mg(2+) is required as a cofactor. It depends on Mn(2+) as a cofactor.

Component of the ERI/DICER complex which is involved in processing amplified double-stranded RNA (dsRNA) intermediates during small-RNA-mediated gene-silencing or RNA interference (RNAi). Involved in cleaving dsRNA in the RNAi pathway. It produces 21 to 23 bp dsRNAs (siRNAs) which target the selective destruction of homologous RNAs. Seems to process the precursor of the small temporal RNA let-7 which is involved in developmental timing. Required for avoidance behavior induced by small RNAs derived from pathogenic bacteria such as P.aeruginosa. Involved in innate immunity through its role in small RNA processing. Its function is as follows. tDCR-1 acts as a deoxyribonuclease (DNase) initiating DNA fragmentation during apoptosis, upstream of nucleases cps-6, crn-2 and nuc-1. In Caenorhabditis elegans, this protein is Endoribonuclease dcr-1.